The chain runs to 382 residues: Pyrimidine monooxygenase RutA (382 aa).

FMN contacts are provided by residues 68-69 (IK), Asn-134, Glu-143, 159-160 (RY), and Ser-209.

This sequence belongs to the NtaA/SnaA/DszA monooxygenase family. RutA subfamily.

It carries out the reaction uracil + FMNH2 + NADH + O2 = (Z)-3-ureidoacrylate + FMN + NAD(+) + H2O + H(+). The enzyme catalyses thymine + FMNH2 + NADH + O2 = (Z)-2-methylureidoacrylate + FMN + NAD(+) + H2O + H(+). Catalyzes the pyrimidine ring opening between N-3 and C-4 by an unusual flavin hydroperoxide-catalyzed mechanism, adding oxygen atoms in the process to yield ureidoacrylate peracid, that immediately reacts with FMN forming ureidoacrylate and FMN-N(5)-oxide. The FMN-N(5)-oxide reacts spontaneously with NADH to produce FMN. Requires the flavin reductase RutF to regenerate FMN in vivo. This is Pyrimidine monooxygenase RutA from Escherichia coli O55:H7 (strain CB9615 / EPEC).